A 136-amino-acid polypeptide reads, in one-letter code: MVRPYPLIYFLFLPLGACFPLLDRREPTDAMGGLGAGERWADLAMGPRPHSVWGSSRWLRASQPQALLVIARGLQTSGREHAGCRFRFGRQDEGSEATGFLPAAGEKTSGPLGNLAEELNGYSRKKGGFSFRFGRR.

A signal peptide spans 1-18 (MVRPYPLIYFLFLPLGAC). Residues 19–90 (FPLLDRREPT…HAGCRFRFGR (72 aa)) constitute a propeptide that is removed on maturation. A Pyrrolidone carboxylic acid modification is found at Gln91. Phe133 bears the Phenylalanine amide mark.

Belongs to the RFamide neuropeptide family. In terms of assembly, ligand for the G-protein coupled receptor QRFPR/GPR103. As to expression, expressed widely in the brain with highest expression levels in the cerebellum, medulla, pituitary, retina, vestibular nucleus, and white matter. Also expressed in the bladder, colon, coronary artery, parathyroid gland, prostate, testis, and thyroid.

It is found in the secreted. Stimulates feeding behavior, metabolic rate and locomotor activity and increases blood pressure. May have orexigenic activity. May promote aldosterone secretion by the adrenal gland. This is Orexigenic neuropeptide QRFP from Homo sapiens (Human).